The following is a 276-amino-acid chain: MAIKKYKPTTNGCRNMSVSAFSEITTQTPEKRLLVSHKDQAGRNNQGKITVRHRGGGVKRKYRLIDFKRNKDNIVGKVATIEYDPNRSANIALIHYLDGEKRYILAPKGLTVGMQIVSGKEADIKVANCLPLMNIPVGTTVHNIELKPGKGGQIARSAGSFCQIISREDKYVLLRLQSGEVRKVLGTCRATIGEIGNESYKLINYGKAGKKRFLGIRPTVRGSAMNPNDHPHGGGEGRAPIGRKSPMTPWGKKARGVKTRDRKKASNALIIRRRTK.

Positions 221–276 (RGSAMNPNDHPHGGGEGRAPIGRKSPMTPWGKKARGVKTRDRKKASNALIIRRRTK) are disordered. A compositionally biased stretch (basic residues) spans 252–276 (KKARGVKTRDRKKASNALIIRRRTK).

It belongs to the universal ribosomal protein uL2 family. In terms of assembly, part of the 50S ribosomal subunit. Forms a bridge to the 30S subunit in the 70S ribosome.

In terms of biological role, one of the primary rRNA binding proteins. Required for association of the 30S and 50S subunits to form the 70S ribosome, for tRNA binding and peptide bond formation. It has been suggested to have peptidyltransferase activity; this is somewhat controversial. Makes several contacts with the 16S rRNA in the 70S ribosome. The sequence is that of Large ribosomal subunit protein uL2 from Onion yellows phytoplasma (strain OY-M).